Consider the following 283-residue polypeptide: Protein-L-isoaspartate O-methyltransferase (283 aa).

Residue Ser-122 is part of the active site.

This sequence belongs to the methyltransferase superfamily. L-isoaspartyl/D-aspartyl protein methyltransferase family.

Its subcellular location is the cytoplasm. The catalysed reaction is [protein]-L-isoaspartate + S-adenosyl-L-methionine = [protein]-L-isoaspartate alpha-methyl ester + S-adenosyl-L-homocysteine. Catalyzes the methyl esterification of L-isoaspartyl residues in peptides and proteins that result from spontaneous decomposition of normal L-aspartyl and L-asparaginyl residues. It plays a role in the repair and/or degradation of damaged proteins. The polypeptide is Protein-L-isoaspartate O-methyltransferase (Leptothrix cholodnii (strain ATCC 51168 / LMG 8142 / SP-6) (Leptothrix discophora (strain SP-6))).